The primary structure comprises 1134 residues: ATP-dependent helicase/deoxyribonuclease subunit B (1134 aa).

ATP is bound at residue 8–15; that stretch reads GRAGSGKS. Cys-771, Cys-1089, Cys-1092, and Cys-1098 together coordinate [4Fe-4S] cluster.

Belongs to the helicase family. AddB/RexB type 1 subfamily. In terms of assembly, heterodimer of AddA and AddB. Mg(2+) serves as cofactor. It depends on [4Fe-4S] cluster as a cofactor.

The heterodimer acts as both an ATP-dependent DNA helicase and an ATP-dependent, dual-direction single-stranded exonuclease. Recognizes the chi site generating a DNA molecule suitable for the initiation of homologous recombination. The AddB subunit has 5' -&gt; 3' nuclease activity but not helicase activity. In Clostridium novyi (strain NT), this protein is ATP-dependent helicase/deoxyribonuclease subunit B.